An 89-amino-acid chain; its full sequence is Small ribosomal subunit protein uS15 (89 aa).

This sequence belongs to the universal ribosomal protein uS15 family. In terms of assembly, part of the 30S ribosomal subunit. Forms a bridge to the 50S subunit in the 70S ribosome, contacting the 23S rRNA.

In terms of biological role, one of the primary rRNA binding proteins, it binds directly to 16S rRNA where it helps nucleate assembly of the platform of the 30S subunit by binding and bridging several RNA helices of the 16S rRNA. Forms an intersubunit bridge (bridge B4) with the 23S rRNA of the 50S subunit in the ribosome. This Photobacterium profundum (strain SS9) protein is Small ribosomal subunit protein uS15.